We begin with the raw amino-acid sequence, 410 residues long: DNA primase small subunit (410 aa).

Residues glutamate 43, aspartate 106, and aspartate 108 contribute to the active site. The Zinc knuckle motif signature appears at 118 to 129; the sequence is CCKDATVCPKCW.

It belongs to the eukaryotic-type primase small subunit family. As to quaternary structure, heterodimer of a small subunit and a large subunit.

DNA primase is the polymerase that synthesizes small RNA primers for the Okazaki fragments made during discontinuous DNA replication. The sequence is that of DNA primase small subunit (pri-1) from Caenorhabditis elegans.